The primary structure comprises 278 residues: Hydroxyethylthiazole kinase (278 aa).

Position 48 (methionine 48) interacts with substrate. Residues arginine 124 and threonine 175 each coordinate ATP. Residue glycine 202 coordinates substrate.

Belongs to the Thz kinase family. Mg(2+) serves as cofactor.

It carries out the reaction 5-(2-hydroxyethyl)-4-methylthiazole + ATP = 4-methyl-5-(2-phosphooxyethyl)-thiazole + ADP + H(+). It functions in the pathway cofactor biosynthesis; thiamine diphosphate biosynthesis; 4-methyl-5-(2-phosphoethyl)-thiazole from 5-(2-hydroxyethyl)-4-methylthiazole: step 1/1. Its function is as follows. Catalyzes the phosphorylation of the hydroxyl group of 4-methyl-5-beta-hydroxyethylthiazole (THZ). The polypeptide is Hydroxyethylthiazole kinase (Clostridium botulinum (strain Eklund 17B / Type B)).